We begin with the raw amino-acid sequence, 345 residues long: Dense granule protein 4 (345 aa).

A signal peptide spans methionine 1–glycine 20. A compositionally biased stretch (polar residues) spans serine 227–threonine 251. The disordered stretch occupies residues serine 227 to lysine 271. A helical transmembrane segment spans residues isoleucine 276–valine 296. Residues glycine 298–glutamate 345 form a disordered region. The segment covering arginine 321–serine 330 has biased composition (pro residues). The segment covering leucine 335–glutamate 345 has biased composition (basic and acidic residues).

O-glycosylated.

It is found in the secreted. It localises to the parasitophorous vacuole lumen. Its subcellular location is the parasitophorous vacuole membrane. The protein localises to the cytoplasmic vesicle. The protein resides in the secretory vesicle. Major granular component involved in excreted-secreted antigen (ESA) immunity. This is Dense granule protein 4 (GRA4) from Toxoplasma gondii.